A 338-amino-acid polypeptide reads, in one-letter code: NADPH dehydrogenase (338 aa).

22–25 (SPMC) is a binding site for FMN. Position 27 (Tyr27) interacts with substrate. FMN-binding residues include Ala59 and Gln101. 163 to 166 (HAAH) serves as a coordination point for substrate. Residues Arg214 and 306–307 (GR) contribute to the FMN site.

It belongs to the NADH:flavin oxidoreductase/NADH oxidase family. NamA subfamily. As to quaternary structure, homotetramer. Requires FMN as cofactor.

It carries out the reaction A + NADPH + H(+) = AH2 + NADP(+). Its function is as follows. Catalyzes the reduction of the double bond of an array of alpha,beta-unsaturated aldehydes and ketones. It also reduces the nitro group of nitroester and nitroaromatic compounds. It could have a role in detoxification processes. This Listeria monocytogenes serovar 1/2a (strain ATCC BAA-679 / EGD-e) protein is NADPH dehydrogenase.